Here is a 147-residue protein sequence, read N- to C-terminus: Ubiquitin-conjugating enzyme E2 4 (147 aa).

The UBC core domain maps to 1-147; sequence MALKRINREL…AREWTRKYAI (147 aa). Cys-85 serves as the catalytic Glycyl thioester intermediate.

The protein belongs to the ubiquitin-conjugating enzyme family. In terms of assembly, interacts with the E1 ubiquitin-activating enzyme ptr3 and E3 ubiquitin-protein ligase pub2.

The catalysed reaction is S-ubiquitinyl-[E1 ubiquitin-activating enzyme]-L-cysteine + [E2 ubiquitin-conjugating enzyme]-L-cysteine = [E1 ubiquitin-activating enzyme]-L-cysteine + S-ubiquitinyl-[E2 ubiquitin-conjugating enzyme]-L-cysteine.. Its pathway is protein modification; protein ubiquitination. In terms of biological role, E2 ubiquitin-conjugating enzyme that catalyzes the covalent attachment of ubiquitin to other proteins. Mediates the selective degradation of short-lived and abnormal proteins. Mediates ubiquitination of pex5. This chain is Ubiquitin-conjugating enzyme E2 4 (ubc4), found in Schizosaccharomyces pombe (strain 972 / ATCC 24843) (Fission yeast).